The primary structure comprises 388 residues: Transcription factor TB1 (388 aa).

The region spanning 115–173 (RKDRHSKISTAGGMRDRRMRLSLDVARKFFALQDMLGFDKASKTVQWLLNMSKAAIREI) is the TCP domain. 2 disordered regions span residues 180–269 (SVCE…EKNR) and 289–331 (AAGE…VGVS). A compositionally biased stretch (polar residues) spans 187–201 (SSSLSVDGKQQQHSN). 2 stretches are compositionally biased toward basic and acidic residues: residues 210-224 (GDHK…DGKK) and 247-269 (VPDK…EKNR). The R domain maps to 250-267 (KESRAKARERARERTKEK). A compositionally biased stretch (low complexity) spans 289-314 (AAGEDKSPTSPSNNLNHSSSTNLVST).

Interacts with MADS57. As to expression, expressed in the axillary bud of the first formed leaf node. Expressed in axillary buds, shoot apical meristem, young leaves, vascular tissues and the tips of crown roots.

The protein localises to the nucleus. Probable transcription factor that functions as a negative regulator of lateral branching, presumably through its expression in axillary buds. Involved in the fine tuning of shoot branching. May function as an integrator of multiple signaling pathways to regulate the development of axillary buds. Works partially downstream of strigolactones to inhibit bud outgrowth. Binds to MADS57 to suppress the negative regulation of D14 by MADS57 and balance the expression of D14 for tillering. The sequence is that of Transcription factor TB1 from Oryza sativa subsp. japonica (Rice).